A 428-amino-acid chain; its full sequence is Histidine--tRNA ligase (428 aa).

Belongs to the class-II aminoacyl-tRNA synthetase family. As to quaternary structure, homodimer.

It localises to the cytoplasm. It carries out the reaction tRNA(His) + L-histidine + ATP = L-histidyl-tRNA(His) + AMP + diphosphate + H(+). The protein is Histidine--tRNA ligase of Staphylococcus carnosus (strain TM300).